We begin with the raw amino-acid sequence, 574 residues long: Septation ring formation regulator EzrA (574 aa).

Residues 1–7 (MSSGIIL) are Extracellular-facing. A helical membrane pass occupies residues 8 to 26 (LIVAIVLLVIIAYLVGVII). At 27–574 (RKRNDSLITS…YEKTREHIRF (548 aa)) the chain is on the cytoplasmic side. Coiled coils occupy residues 102-141 (NFIR…EEKN), 274-350 (ELVT…ETES), and 459-520 (QLEA…SFEA).

This sequence belongs to the EzrA family.

It is found in the cell membrane. Functionally, negative regulator of FtsZ ring formation; modulates the frequency and position of FtsZ ring formation. Inhibits FtsZ ring formation at polar sites. Interacts either with FtsZ or with one of its binding partners to promote depolymerization. This is Septation ring formation regulator EzrA from Streptococcus pyogenes serotype M1.